The primary structure comprises 1436 residues: tRNA (guanosine(18)-2'-O)-methyltransferase (1436 aa).

S-adenosyl-L-methionine contacts are provided by residues 1365-1367 (LEQ), Gly-1389, and 1409-1418 (IQQFGVIRSM).

It belongs to the class IV-like SAM-binding methyltransferase superfamily. RNA methyltransferase TrmH family.

It is found in the cytoplasm. The catalysed reaction is guanosine(18) in tRNA + S-adenosyl-L-methionine = 2'-O-methylguanosine(18) in tRNA + S-adenosyl-L-homocysteine + H(+). Its function is as follows. S-adenosyl-L-methionine-dependent 2'-O-ribose methyltransferase that catalyzes the formation of 2'-O-methylguanosine at position 18 (Gm18) in various tRNAs. The polypeptide is tRNA (guanosine(18)-2'-O)-methyltransferase (Saccharomyces cerevisiae (strain ATCC 204508 / S288c) (Baker's yeast)).